We begin with the raw amino-acid sequence, 371 residues long: Phospho-N-acetylmuramoyl-pentapeptide-transferase (371 aa).

10 helical membrane passes run 25 to 45 (YLTF…VAMG), 79 to 99 (TMGG…FADL), 104 to 124 (VWVV…DDYA), 139 to 159 (KLIA…IFAP), 179 to 199 (LVIN…AGFS), 210 to 230 (GLAI…AYLV), 247 to 267 (VGEL…FLWY), 274 to 294 (IFMG…IAVC), 299 to 319 (LVLG…MIQV), and 348 to 368 (TVVI…LATL).

This sequence belongs to the glycosyltransferase 4 family. MraY subfamily. The cofactor is Mg(2+).

It localises to the cell inner membrane. It carries out the reaction UDP-N-acetyl-alpha-D-muramoyl-L-alanyl-gamma-D-glutamyl-meso-2,6-diaminopimeloyl-D-alanyl-D-alanine + di-trans,octa-cis-undecaprenyl phosphate = di-trans,octa-cis-undecaprenyl diphospho-N-acetyl-alpha-D-muramoyl-L-alanyl-D-glutamyl-meso-2,6-diaminopimeloyl-D-alanyl-D-alanine + UMP. Its pathway is cell wall biogenesis; peptidoglycan biosynthesis. Catalyzes the initial step of the lipid cycle reactions in the biosynthesis of the cell wall peptidoglycan: transfers peptidoglycan precursor phospho-MurNAc-pentapeptide from UDP-MurNAc-pentapeptide onto the lipid carrier undecaprenyl phosphate, yielding undecaprenyl-pyrophosphoryl-MurNAc-pentapeptide, known as lipid I. In Caulobacter sp. (strain K31), this protein is Phospho-N-acetylmuramoyl-pentapeptide-transferase.